The primary structure comprises 520 residues: Cyclin-L2 (520 aa).

Residue alanine 2 is modified to N-acetylalanine. Cyclin-like stretches follow at residues 83–185 (ELIQ…RVLK) and 198–282 (KIIV…KILQ). Positions 316–520 (LPGGTQVLDG…DHPGHSRHRR (205 aa)) are disordered. A phosphoserine mark is found at serine 330, serine 338, serine 348, and serine 351. Over residues 357-367 (RRLEGAKKAKA) the composition is skewed to basic and acidic residues. Serine 369 carries the post-translational modification Phosphoserine. Residues 376–390 (KGRESRSRSRSREQS) show a composition bias toward basic and acidic residues. Residues 385–423 (RSREQSYSRSPSRSASPKRRKSDSGSTSGGSKSQSRSRS) are RS. Low complexity predominate over residues 408 to 436 (SGSTSGGSKSQSRSRSRSDSPPRQAPRSA). A compositionally biased stretch (basic and acidic residues) spans 441–454 (SEIRGSRKSKDCKY). The span at 456 to 471 (QKPHKSRSRSSSRSRS) shows a compositional bias: basic residues. Composition is skewed to basic and acidic residues over residues 472–481 (RSRERADNPG) and 489–514 (YYRDQRRERSRSYERTGRRYERDHPG).

Belongs to the cyclin family. Cyclin L subfamily. Interacts with CDK11A, CDK11B, CDK12, CDK13 and POLR2A, the hyperphosphorylated C-terminal domain (CTD) of RNA polymerase II. May form a ternary complex with CDK11B and casein kinase II (CKII). Interacts with pre-mRNA-splicing factors, including at least SRSF1, SRSF2 AND SRSF7/SLU7. As to expression, widely expressed.

It localises to the nucleus speckle. It is found in the nucleus. The protein resides in the nucleoplasm. In terms of biological role, involved in pre-mRNA splicing. May induce cell death, possibly by acting on the transcription and RNA processing of apoptosis-related factors. In Homo sapiens (Human), this protein is Cyclin-L2 (CCNL2).